Reading from the N-terminus, the 607-residue chain is Arginine--tRNA ligase (607 aa).

Positions 147-157 match the 'HIGH' region motif; the sequence is PNIAKEMHVGH.

This sequence belongs to the class-I aminoacyl-tRNA synthetase family. In terms of assembly, monomer.

Its subcellular location is the cytoplasm. The catalysed reaction is tRNA(Arg) + L-arginine + ATP = L-arginyl-tRNA(Arg) + AMP + diphosphate. This chain is Arginine--tRNA ligase, found in Prochlorococcus marinus (strain NATL1A).